The following is a 470-amino-acid chain: MSAAKPTTLYDKIWNDHLVHEAEDGTCLLYIDRHLVHEVTSPQAFEGLRTAGRKVHSPEKTLAVVDHNVPTTDRSKPNPDPESAEQIAALAENARDFGVTYYNEHDKRQGVVHVIGPEQGFTLPGTTIVCGDSHTSTHGAFGALAHGIGTSEVEHVLATQTLIQKKAKNMRVTVDGDLPDGVTAKDIILAIIGEIGTAGGTGYVLEYAGDAIRALSMEGRMTVCNMSIEGGARAGLIAPDEKAYAYLKGRPMAPTGANWDAAMRYWDTLRSDEGAHFDHELRLDAAALPPIVTWGTSPEDVISITGRVPNPADIADEAKRLSKERALAYMGLTPGTRITDIKIDRMFIGSCTNGRIEDLRAAAKVAEGKTVNGNVSAMIVPGSGLVKEQAEAEGLDKIFVKAGFEWREPGCSMCLAMNPDKLAPEERCASTSNRNFEGRQGFKGRTHLVSPAMAAAAAIAGHFVDIREWR.

[4Fe-4S] cluster contacts are provided by Cys351, Cys411, and Cys414.

The protein belongs to the aconitase/IPM isomerase family. LeuC type 1 subfamily. In terms of assembly, heterodimer of LeuC and LeuD. [4Fe-4S] cluster is required as a cofactor.

The catalysed reaction is (2R,3S)-3-isopropylmalate = (2S)-2-isopropylmalate. It participates in amino-acid biosynthesis; L-leucine biosynthesis; L-leucine from 3-methyl-2-oxobutanoate: step 2/4. Its function is as follows. Catalyzes the isomerization between 2-isopropylmalate and 3-isopropylmalate, via the formation of 2-isopropylmaleate. In Rhodopseudomonas palustris (strain BisB5), this protein is 3-isopropylmalate dehydratase large subunit.